The sequence spans 422 residues: Histidine--tRNA ligase (422 aa).

Belongs to the class-II aminoacyl-tRNA synthetase family. In terms of assembly, homodimer.

The protein resides in the cytoplasm. The catalysed reaction is tRNA(His) + L-histidine + ATP = L-histidyl-tRNA(His) + AMP + diphosphate + H(+). In Aliivibrio fischeri (strain ATCC 700601 / ES114) (Vibrio fischeri), this protein is Histidine--tRNA ligase.